Reading from the N-terminus, the 660-residue chain is Acetyl-coenzyme A synthetase (660 aa).

Residues 197–200 and Thr317 contribute to the CoA site; that span reads RGGK. ATP-binding positions include 397–399, 421–426, Asp512, and Arg528; these read GEP and DTFWQT. Ser536 is a CoA binding site. Residue Arg539 coordinates ATP. 2 residues coordinate Mg(2+): Val550 and Val555. Residue Lys625 is modified to N6-acetyllysine.

This sequence belongs to the ATP-dependent AMP-binding enzyme family. Mg(2+) serves as cofactor. Post-translationally, acetylated. Deacetylation by the SIR2-homolog deacetylase activates the enzyme.

It catalyses the reaction acetate + ATP + CoA = acetyl-CoA + AMP + diphosphate. Catalyzes the conversion of acetate into acetyl-CoA (AcCoA), an essential intermediate at the junction of anabolic and catabolic pathways. AcsA undergoes a two-step reaction. In the first half reaction, AcsA combines acetate with ATP to form acetyl-adenylate (AcAMP) intermediate. In the second half reaction, it can then transfer the acetyl group from AcAMP to the sulfhydryl group of CoA, forming the product AcCoA. This Ralstonia nicotianae (strain ATCC BAA-1114 / GMI1000) (Ralstonia solanacearum) protein is Acetyl-coenzyme A synthetase.